The sequence spans 95 residues: Aspartyl/glutamyl-tRNA(Asn/Gln) amidotransferase subunit C (95 aa).

This sequence belongs to the GatC family. As to quaternary structure, heterotrimer of A, B and C subunits.

It catalyses the reaction L-glutamyl-tRNA(Gln) + L-glutamine + ATP + H2O = L-glutaminyl-tRNA(Gln) + L-glutamate + ADP + phosphate + H(+). The catalysed reaction is L-aspartyl-tRNA(Asn) + L-glutamine + ATP + H2O = L-asparaginyl-tRNA(Asn) + L-glutamate + ADP + phosphate + 2 H(+). In terms of biological role, allows the formation of correctly charged Asn-tRNA(Asn) or Gln-tRNA(Gln) through the transamidation of misacylated Asp-tRNA(Asn) or Glu-tRNA(Gln) in organisms which lack either or both of asparaginyl-tRNA or glutaminyl-tRNA synthetases. The reaction takes place in the presence of glutamine and ATP through an activated phospho-Asp-tRNA(Asn) or phospho-Glu-tRNA(Gln). This is Aspartyl/glutamyl-tRNA(Asn/Gln) amidotransferase subunit C from Chlorobium limicola (strain DSM 245 / NBRC 103803 / 6330).